The sequence spans 432 residues: Adenylosuccinate synthetase (432 aa).

GTP contacts are provided by residues 12-18 and 40-42; these read GDEGKGK and GHT. The active-site Proton acceptor is aspartate 13. Aspartate 13 and glycine 40 together coordinate Mg(2+). IMP contacts are provided by residues 13–16, 38–41, threonine 131, arginine 145, glutamine 226, threonine 241, and arginine 305; these read DEGK and NAGH. The active-site Proton donor is the histidine 41. Residue 301–307 participates in substrate binding; that stretch reads ATTGRPR. GTP-binding positions include arginine 307, 333-335, and 415-417; these read KLD and STG.

It belongs to the adenylosuccinate synthetase family. As to quaternary structure, homodimer. Mg(2+) is required as a cofactor.

Its subcellular location is the cytoplasm. The catalysed reaction is IMP + L-aspartate + GTP = N(6)-(1,2-dicarboxyethyl)-AMP + GDP + phosphate + 2 H(+). It functions in the pathway purine metabolism; AMP biosynthesis via de novo pathway; AMP from IMP: step 1/2. Its function is as follows. Plays an important role in the de novo pathway of purine nucleotide biosynthesis. Catalyzes the first committed step in the biosynthesis of AMP from IMP. The sequence is that of Adenylosuccinate synthetase from Magnetococcus marinus (strain ATCC BAA-1437 / JCM 17883 / MC-1).